The primary structure comprises 223 residues: Thymidine kinase (223 aa).

Residues Gly19 to Thr26 and Asp96 to Gln99 contribute to the ATP site. The active-site Proton acceptor is the Glu97. Zn(2+) is bound by residues Cys153, Cys156, Cys191, and His194.

The protein belongs to the thymidine kinase family. In terms of assembly, homotetramer.

It localises to the cytoplasm. The catalysed reaction is thymidine + ATP = dTMP + ADP + H(+). The polypeptide is Thymidine kinase (Ureaplasma urealyticum serovar 10 (strain ATCC 33699 / Western)).